A 370-amino-acid polypeptide reads, in one-letter code: MKFIDEARIEVIAGDGGDGSASMRREKFVPFGGPDGGDGGRGGSVYAIADRNINTLIDYRYAKKHLARNGENGRGSDCYGKGGDDVTLRMPVGTIISDMDTGELIADLTEHDQQVMLAQGGAGGLGNLHFKSSTNRAPRQKTDGKPGERRMLKLELKVLADVGLLGMPNAGKSTFISSVSNAKPKIADYPFTTLAPNLGVVRVGPSKSFVIADIPGLIEGAAEGAGLGHQFLRHLQRTGVLLHLVDLAPFDESVDPVAEATAIVGELRKYDEALYEKPRWLVLNKLDMVPEDEREARVADFLDRFGWDGPVFEISALTGQGCEALCYAIYDYLSEHSDAHRAAEAEDLAADVRFRDAPPAKGGATPGDDA.

The Obg domain occupies 1–159 (MKFIDEARIE…RMLKLELKVL (159 aa)). The interval 128 to 147 (LHFKSSTNRAPRQKTDGKPG) is disordered. The OBG-type G domain occupies 160–334 (ADVGLLGMPN…LCYAIYDYLS (175 aa)). GTP-binding positions include 166 to 173 (GMPNAGKS), 191 to 195 (FTTLA), 213 to 216 (DIPG), 284 to 287 (NKLD), and 315 to 317 (SAL). Serine 173 and threonine 193 together coordinate Mg(2+).

It belongs to the TRAFAC class OBG-HflX-like GTPase superfamily. OBG GTPase family. In terms of assembly, monomer. It depends on Mg(2+) as a cofactor.

The protein localises to the cytoplasm. An essential GTPase which binds GTP, GDP and possibly (p)ppGpp with moderate affinity, with high nucleotide exchange rates and a fairly low GTP hydrolysis rate. Plays a role in control of the cell cycle, stress response, ribosome biogenesis and in those bacteria that undergo differentiation, in morphogenesis control. This chain is GTPase Obg, found in Burkholderia orbicola (strain MC0-3).